Reading from the N-terminus, the 465-residue chain is Cysteine--tRNA ligase (465 aa).

Residue Cys30 coordinates Zn(2+). A 'HIGH' region motif is present at residues 32 to 42 (ITVYDYCHVGH). 3 residues coordinate Zn(2+): Cys214, His239, and Glu243. The short motif at 271–275 (KMSKS) is the 'KMSKS' region element. Position 274 (Lys274) interacts with ATP.

The protein belongs to the class-I aminoacyl-tRNA synthetase family. In terms of assembly, monomer. Requires Zn(2+) as cofactor.

Its subcellular location is the cytoplasm. The catalysed reaction is tRNA(Cys) + L-cysteine + ATP = L-cysteinyl-tRNA(Cys) + AMP + diphosphate. In Burkholderia cenocepacia (strain HI2424), this protein is Cysteine--tRNA ligase.